We begin with the raw amino-acid sequence, 105 residues long: Protein SMALL AUXIN UP-REGULATED RNA 16 (105 aa).

This sequence belongs to the ARG7 family. As to expression, expressed in etiolated hypocotyls, cotyledons, leaves, flowers and siliques.

The protein resides in the cell membrane. Provide a mechanistic link between auxin and plasma membrane H(+)-ATPases (PM H(+)-ATPases, e.g. AHA1 and AHA2), and triggers PM H(+)-ATPases activity by promoting phosphorylation of their C-terminal autoinhibitory domain as a result of PP2C-D subfamily of type 2C phosphatases inhibition, thus leading to the acidification of the apoplast and the facilitation of solutes and water uptake to drive cell expansion. Triggers plant growth probably by promoting cell elongation. Regulates branch angles and bending. The protein is Protein SMALL AUXIN UP-REGULATED RNA 16 of Arabidopsis thaliana (Mouse-ear cress).